A 397-amino-acid polypeptide reads, in one-letter code: Enoyl-[acyl-carrier-protein] reductase [NADH] (397 aa).

Residues 48–53 (GASTGY), 74–75 (FE), 111–112 (DA), and 139–140 (VA) contribute to the NAD(+) site. Tyr225 provides a ligand contact to substrate. Tyr235 (proton donor) is an active-site residue. Residues Lys244 and 273–275 (VVT) contribute to the NAD(+) site.

The protein belongs to the TER reductase family. As to quaternary structure, monomer.

The catalysed reaction is a 2,3-saturated acyl-[ACP] + NAD(+) = a (2E)-enoyl-[ACP] + NADH + H(+). Its pathway is lipid metabolism; fatty acid biosynthesis. Its function is as follows. Involved in the final reduction of the elongation cycle of fatty acid synthesis (FAS II). Catalyzes the reduction of a carbon-carbon double bond in an enoyl moiety that is covalently linked to an acyl carrier protein (ACP). This chain is Enoyl-[acyl-carrier-protein] reductase [NADH], found in Burkholderia pseudomallei (strain 668).